A 312-amino-acid polypeptide reads, in one-letter code: tRNA dimethylallyltransferase (312 aa).

10-17 (GPTGVGKT) is a binding site for ATP. Residue 12–17 (TGVGKT) participates in substrate binding.

This sequence belongs to the IPP transferase family. In terms of assembly, monomer. Mg(2+) serves as cofactor.

The enzyme catalyses adenosine(37) in tRNA + dimethylallyl diphosphate = N(6)-dimethylallyladenosine(37) in tRNA + diphosphate. Functionally, catalyzes the transfer of a dimethylallyl group onto the adenine at position 37 in tRNAs that read codons beginning with uridine, leading to the formation of N6-(dimethylallyl)adenosine (i(6)A). The protein is tRNA dimethylallyltransferase of Coprothermobacter proteolyticus (strain ATCC 35245 / DSM 5265 / OCM 4 / BT).